We begin with the raw amino-acid sequence, 418 residues long: Serine hydroxymethyltransferase (418 aa).

Residues leucine 121 and glycine 125–leucine 127 contribute to the (6S)-5,6,7,8-tetrahydrofolate site. Position 230 is an N6-(pyridoxal phosphate)lysine (lysine 230). Residues glutamate 246 and serine 355–phenylalanine 357 each bind (6S)-5,6,7,8-tetrahydrofolate.

The protein belongs to the SHMT family. As to quaternary structure, homodimer. The cofactor is pyridoxal 5'-phosphate.

It localises to the cytoplasm. The catalysed reaction is (6R)-5,10-methylene-5,6,7,8-tetrahydrofolate + glycine + H2O = (6S)-5,6,7,8-tetrahydrofolate + L-serine. Its pathway is one-carbon metabolism; tetrahydrofolate interconversion. It functions in the pathway amino-acid biosynthesis; glycine biosynthesis; glycine from L-serine: step 1/1. In terms of biological role, catalyzes the reversible interconversion of serine and glycine with tetrahydrofolate (THF) serving as the one-carbon carrier. This reaction serves as the major source of one-carbon groups required for the biosynthesis of purines, thymidylate, methionine, and other important biomolecules. Also exhibits THF-independent aldolase activity toward beta-hydroxyamino acids, producing glycine and aldehydes, via a retro-aldol mechanism. This chain is Serine hydroxymethyltransferase, found in Streptococcus pneumoniae (strain Hungary19A-6).